The chain runs to 460 residues: Bifunctional protein GlmU (460 aa).

Residues 1 to 229 (MTNYAIILAA…FNESLGVNDR (229 aa)) are pyrophosphorylase. Residues 8-11 (LAAG), Lys22, Gln72, and 77-78 (GT) contribute to the UDP-N-acetyl-alpha-D-glucosamine site. Mg(2+) is bound at residue Asp102. UDP-N-acetyl-alpha-D-glucosamine is bound by residues Gly139, Glu154, Asn169, and Asn227. Position 227 (Asn227) interacts with Mg(2+). The interval 230–250 (VALATAETVMRQRITQKHMVN) is linker. Residues 251 to 460 (GVTFQNPETV…RLAHHPSRSK (210 aa)) form an N-acetyltransferase region. Residues Arg332 and Lys350 each coordinate UDP-N-acetyl-alpha-D-glucosamine. His362 serves as the catalytic Proton acceptor. UDP-N-acetyl-alpha-D-glucosamine is bound by residues Tyr365 and Asn376. Acetyl-CoA is bound by residues Ala379, 385-386 (NY), Ser404, Ala422, and Arg439.

The protein in the N-terminal section; belongs to the N-acetylglucosamine-1-phosphate uridyltransferase family. In the C-terminal section; belongs to the transferase hexapeptide repeat family. As to quaternary structure, homotrimer. The cofactor is Mg(2+).

Its subcellular location is the cytoplasm. It carries out the reaction alpha-D-glucosamine 1-phosphate + acetyl-CoA = N-acetyl-alpha-D-glucosamine 1-phosphate + CoA + H(+). The enzyme catalyses N-acetyl-alpha-D-glucosamine 1-phosphate + UTP + H(+) = UDP-N-acetyl-alpha-D-glucosamine + diphosphate. It participates in nucleotide-sugar biosynthesis; UDP-N-acetyl-alpha-D-glucosamine biosynthesis; N-acetyl-alpha-D-glucosamine 1-phosphate from alpha-D-glucosamine 6-phosphate (route II): step 2/2. It functions in the pathway nucleotide-sugar biosynthesis; UDP-N-acetyl-alpha-D-glucosamine biosynthesis; UDP-N-acetyl-alpha-D-glucosamine from N-acetyl-alpha-D-glucosamine 1-phosphate: step 1/1. Its pathway is bacterial outer membrane biogenesis; LPS lipid A biosynthesis. In terms of biological role, catalyzes the last two sequential reactions in the de novo biosynthetic pathway for UDP-N-acetylglucosamine (UDP-GlcNAc). The C-terminal domain catalyzes the transfer of acetyl group from acetyl coenzyme A to glucosamine-1-phosphate (GlcN-1-P) to produce N-acetylglucosamine-1-phosphate (GlcNAc-1-P), which is converted into UDP-GlcNAc by the transfer of uridine 5-monophosphate (from uridine 5-triphosphate), a reaction catalyzed by the N-terminal domain. This is Bifunctional protein GlmU from Streptococcus pyogenes serotype M18 (strain MGAS8232).